The following is a 526-amino-acid chain: Histone-lysine N-methyltransferase SET5 (526 aa).

Residues 112–403 enclose the SET domain; it reads AKVEVKFIDD…KGEQIRITYV (292 aa). The segment at 450–492 is disordered; sequence NLGVEKIDSNDNSEDGSKKSTGNRKSSMREAQPDLKEILKNGK. Residues 476–492 are compositionally biased toward basic and acidic residues; it reads SMREAQPDLKEILKNGK. At Ser517 the chain carries Phosphoserine.

The protein belongs to the class V-like SAM-binding methyltransferase superfamily. Histone-lysine methyltransferase family. SET5 subfamily.

The protein localises to the nucleus. It is found in the chromosome. It localises to the cytoplasm. It catalyses the reaction L-lysyl-[histone] + S-adenosyl-L-methionine = N(6)-methyl-L-lysyl-[histone] + S-adenosyl-L-homocysteine + H(+). In terms of biological role, histone methyltransferase that monomethylates 'Lys-5', 'Lys-8' and 'Lys-12' of histone H4 (H4K5me1, H4K8me1 and H4K12me1, respectively), thereby controlling gene expression and remodeling chromatin structures. The chain is Histone-lysine N-methyltransferase SET5 (SET5) from Saccharomyces cerevisiae (strain YJM789) (Baker's yeast).